We begin with the raw amino-acid sequence, 273 residues long: Aspartate/glutamate leucyltransferase (273 aa).

The protein belongs to the R-transferase family. Bpt subfamily.

The protein resides in the cytoplasm. The enzyme catalyses N-terminal L-glutamyl-[protein] + L-leucyl-tRNA(Leu) = N-terminal L-leucyl-L-glutamyl-[protein] + tRNA(Leu) + H(+). It carries out the reaction N-terminal L-aspartyl-[protein] + L-leucyl-tRNA(Leu) = N-terminal L-leucyl-L-aspartyl-[protein] + tRNA(Leu) + H(+). Functionally, functions in the N-end rule pathway of protein degradation where it conjugates Leu from its aminoacyl-tRNA to the N-termini of proteins containing an N-terminal aspartate or glutamate. This chain is Aspartate/glutamate leucyltransferase, found in Ruegeria pomeroyi (strain ATCC 700808 / DSM 15171 / DSS-3) (Silicibacter pomeroyi).